Reading from the N-terminus, the 292-residue chain is Zinc finger protein OZF (292 aa).

C2H2-type zinc fingers lie at residues Phe16–His38, Phe44–His66, Phe72–His94, Phe100–His122, Phe128–His150, Phe156–His178, Tyr184–His206, Tyr212–His234, Tyr240–His262, and Tyr268–His290. Residues Lys28, Lys51, and Lys56 each participate in a glycyl lysine isopeptide (Lys-Gly) (interchain with G-Cter in SUMO2) cross-link. Residues Lys157 and Lys169 each participate in a glycyl lysine isopeptide (Lys-Gly) (interchain with G-Cter in SUMO) cross-link. Lys173 participates in a covalent cross-link: Glycyl lysine isopeptide (Lys-Gly) (interchain with G-Cter in SUMO2). An interaction with TERF2IP region spans residues Tyr212 to His292.

This sequence belongs to the krueppel C2H2-type zinc-finger protein family. In terms of assembly, binds DNA. Interacts with SUMO conjugating enzyme UBC9/UBE2I. Interacts with the telomeric protein TERF2IP. As to expression, expressed in heart, brain, liver, lung, skeletal muscle and kidney, and at much lower level in spleen and testicle. Expressed in lactating mammary gland.

The protein resides in the nucleus. This Mus musculus (Mouse) protein is Zinc finger protein OZF (Znf146).